We begin with the raw amino-acid sequence, 336 residues long: Aldehyde reductase AdhA (336 aa).

Positions 36, 39, 61, 92, 95, 98, 106, and 148 each coordinate Zn(2+).

The protein belongs to the zinc-containing alcohol dehydrogenase family. In terms of assembly, homotetramer. Zn(2+) is required as a cofactor.

It is found in the cytoplasm. It carries out the reaction a primary alcohol + NADP(+) = an aldehyde + NADPH + H(+). Active on a wide variety of primary alcohols and their corresponding aldehydes, but not against ketones nor secondary alcohols. Active on aliphatic compounds up to 5 carbons in length and aromatic alcohols, less effective on branched-chain primary alcohols. Prefers NADPH to NADH. Its catalytic efficiency is greatest for aldehydes, suggesting the reduction of aromatic and medium-chain aliphatic aldehydes is its in vivo activity. Plays a role in tolerance to internally produced ethanol. This Synechocystis sp. (strain ATCC 27184 / PCC 6803 / Kazusa) protein is Aldehyde reductase AdhA.